The primary structure comprises 246 residues: Small ribosomal subunit protein uS2 (246 aa).

Belongs to the universal ribosomal protein uS2 family.

This chain is Small ribosomal subunit protein uS2, found in Burkholderia cenocepacia (strain ATCC BAA-245 / DSM 16553 / LMG 16656 / NCTC 13227 / J2315 / CF5610) (Burkholderia cepacia (strain J2315)).